A 229-amino-acid polypeptide reads, in one-letter code: 7-cyano-7-deazaguanine synthase (229 aa).

An ATP-binding site is contributed by 7–17 (LSGGLDSSTIL). Zn(2+) is bound by residues Cys-191, Cys-199, Cys-202, and Cys-205.

This sequence belongs to the QueC family. Zn(2+) serves as cofactor.

It carries out the reaction 7-carboxy-7-deazaguanine + NH4(+) + ATP = 7-cyano-7-deazaguanine + ADP + phosphate + H2O + H(+). Its pathway is purine metabolism; 7-cyano-7-deazaguanine biosynthesis. Catalyzes the ATP-dependent conversion of 7-carboxy-7-deazaguanine (CDG) to 7-cyano-7-deazaguanine (preQ(0)). The chain is 7-cyano-7-deazaguanine synthase from Nostoc sp. (strain PCC 7120 / SAG 25.82 / UTEX 2576).